We begin with the raw amino-acid sequence, 43 residues long: Protein PsbN (43 aa).

The helical transmembrane segment at 5–27 (TLVAISISCLLVSFTGYALYTAF) threads the bilayer.

It belongs to the PsbN family.

The protein resides in the plastid. Its subcellular location is the chloroplast thylakoid membrane. Functionally, may play a role in photosystem I and II biogenesis. In Cedrus deodara (Deodar cedar), this protein is Protein PsbN.